Here is a 154-residue protein sequence, read N- to C-terminus: Leghemoglobin-2 (154 aa).

Positions 3–151 (ALTESQAALV…LAIVIKKEMN (149 aa)) constitute a Globin domain. Residue S46 participates in heme b binding. The residue at position 46 (S46) is a Phosphoserine. Residue H64 participates in O2 binding. The heme b site is built by K67, H98, and K101. Y139 is modified (nitrated tyrosine).

Belongs to the plant globin family. In terms of assembly, monomer. Post-translationally, nitrated in effective nodules and particularly in hypoxic conditions; this mechanism may play a protective role in the symbiosis by buffering toxic peroxynitrite NO(2)(-). Nitration level decrease during nodule senescence. In terms of processing, phosphorylation at Ser-46 disrupts the molecular environment of its porphyrin ring oxygen binding pocket, thus leading to a reduced oxygen consumption and to the delivery of oxygen O(2) to symbiosomes. As to expression, root nodules.

It localises to the cytoplasm. The protein localises to the cytosol. It is found in the nucleus. In terms of biological role, leghemoglobin that reversibly binds oxygen O(2) through a pentacoordinated heme iron. In root nodules, facilitates the diffusion of oxygen to the bacteroids while preventing the bacterial nitrogenase from being inactivated by buffering dioxygen, nitric oxide and carbon monoxide, and promoting the formation of reactive oxygen species (ROS, e.g. H(2)O(2)). This role is essential for symbiotic nitrogen fixation (SNF). This chain is Leghemoglobin-2, found in Lupinus luteus (European yellow lupine).